Consider the following 1669-residue polypeptide: Polycomb group protein Asx (1669 aa).

The disordered stretch occupies residues 90-109 (IPPEKKPMAPSEEAAVSTAP). The DEUBAD domain maps to 215 to 338 (PDSILASTNL…FEPFWGEKNS (124 aa)). 2 short sequence motifs (LXXLL motif) span residues 224–228 (LRALL) and 244–248 (LIQLL). An NEF motif motif is present at residues 283 to 285 (NEF). Residues 336 to 352 (KNSRGKDKDKLESDCKN) are compositionally biased toward basic and acidic residues. 8 disordered regions span residues 336–378 (KNSR…QQAT), 410–478 (SSTF…IVPN), 635–718 (FFTS…SAGA), 952–972 (MPHQ…QQQR), 1174–1193 (QQQS…QQQL), 1398–1437 (PGPG…PEQL), 1482–1505 (LHSI…TAGS), and 1587–1610 (SPTA…QHQH). 3 stretches are compositionally biased toward polar residues: residues 367-378 (ATSQQKPLQQAT), 413-425 (FPPT…VLNE), and 434-450 (PSSS…TIAT). The span at 465-474 (KDSKQPKMDE) shows a compositional bias: basic and acidic residues. A compositionally biased stretch (low complexity) spans 635 to 650 (FFTSSSSSNTATTAAN). Residues 651–661 (KLEEHSDKPED) are compositionally biased toward basic and acidic residues. The segment covering 666–718 (IASSISGSTPASSITSTSCTSSSSSSASMSSSCSSSNSGSTTTAPTTSSSAGA) has biased composition (low complexity). Low complexity-rich tracts occupy residues 1174–1192 (QQQS…QQQQ) and 1404–1436 (TATA…APEQ). Over residues 1592–1610 (PSPINQQPQSQPTGTQHQH) the composition is skewed to low complexity. A PHD-type; atypical zinc finger spans residues 1602 to 1666 (QPTGTQHQHP…IGAAKLCVAC (65 aa)).

Belongs to the Asx family. Component of the polycomb repressive deubiquitinase (PR-DUB) complex, at least composed of caly/calypso, Asx and sba (MBD5/6 homolog). Interacts (via DEUBAD domain) with caly/calypso (via ULD domain); the interaction produces a stable heterodimer with a composite binding site for ubiquitin. Two copies of the caly-Asx heterodimer assemble into a bidentate tetramer. Interacts (via PHD domain) with sba (probably via MBD domain); the interaction is important for the stability of the PR-DUB complex. Interacts with tant. Interacts with cyclin CycG. In terms of tissue distribution, highly expressed in nurse cells and deposited in oocytes late in oogenesis. Ubiquitous in early embryos. Late embryos show higher levels in CNS and neurectoderm.

It is found in the nucleus. The protein localises to the chromosome. Its function is as follows. Non-catalytic component of the polycomb repressive deubiquitinase (PR-DUB) complex, a complex that specifically mediates deubiquitination of histone H2A monoubiquitinated at 'Lys-119' (H2AK118ub1). Activator of the PR-DUB complex involved in ubiquitin binding and allosteric activation of calypso deubiquitinase activity. PR-DUB does not deubiquitinate monoubiquitinated histone H2B. PR-DUB is required to maintain the transcriptionally repressive state of homeotic genes throughout development. The PR-DUB complex has weak or no activity toward 'Lys-48'- and 'Lys-63'-linked polyubiquitin chains. Atypical Polycomb group protein, which may be involved in both Polycomb group (PcG) and trithorax group (trxG) complexes. PcG and trxG proteins act by forming multiprotein complexes, which are respectively required to maintain the transcriptionally repressive and transcriptionally active state of homeotic genes throughout development. PcG and trxG protein complexes are not required to initiate repression and activation, but to maintain it during later stages of development. This is Polycomb group protein Asx from Drosophila melanogaster (Fruit fly).